A 458-amino-acid polypeptide reads, in one-letter code: Transcription factor ORF10 (458 aa).

The segment at residues 38–65 (CESCRLKKLRCSGHKSGCDRCRSQAMKC) is a DNA-binding region (zn(2)-C6 fungal-type). Residues 69 to 109 (IGAPSNSSRPKSRSHFQPNFSNMSGTAGTSKAPSPLGNDGV) are disordered. Residues 71 to 100 (APSNSSRPKSRSHFQPNFSNMSGTAGTSKA) are compositionally biased toward polar residues.

The protein resides in the nucleus. Functionally, transcription factor that specifically regulates the expression of the gene cluster that mediates the biosynthesis of PR-toxin, a bicyclic sesquiterpene belonging to the eremophilane class and acting as a mycotoxin. This chain is Transcription factor ORF10, found in Penicillium roqueforti (strain FM164).